Consider the following 121-residue polypeptide: MARIAGVDIPREKRVVISLTYIYGIGTSTAQKILEEANVSADTRVKDLTDDELGRIREVVDGYKVEGDLRRETNLNIKRLMEISSYRGIRHRRGLPVRGQKTKNNARTRKGPVKTVANKKK.

Residues 91–121 are disordered; that stretch reads HRRGLPVRGQKTKNNARTRKGPVKTVANKKK.

The protein belongs to the universal ribosomal protein uS13 family. Part of the 30S ribosomal subunit. Forms a loose heterodimer with protein S19. Forms two bridges to the 50S subunit in the 70S ribosome.

Its function is as follows. Located at the top of the head of the 30S subunit, it contacts several helices of the 16S rRNA. In the 70S ribosome it contacts the 23S rRNA (bridge B1a) and protein L5 of the 50S subunit (bridge B1b), connecting the 2 subunits; these bridges are implicated in subunit movement. Contacts the tRNAs in the A and P-sites. In Staphylococcus aureus (strain Mu3 / ATCC 700698), this protein is Small ribosomal subunit protein uS13.